The primary structure comprises 167 residues: Fluoride-specific ion channel FluC (167 aa).

Helical transmembrane passes span 32 to 52 (HVTPIYTIAAISLGASLGALA), 69 to 89 (IGTLAANLIAAYVVGVTIAYV), 102 to 122 (FMITGLAGGLSTFSTFTAELF), and 137 to 157 (LGLHVGGSLALLMLGMLTIGL). Gly109 and Ser112 together coordinate Na(+).

This sequence belongs to the fluoride channel Fluc/FEX (TC 1.A.43) family.

It localises to the cell inner membrane. It catalyses the reaction fluoride(in) = fluoride(out). Na(+) is not transported, but it plays an essential structural role and its presence is essential for fluoride channel function. In terms of biological role, fluoride-specific ion channel. Important for reducing fluoride concentration in the cell, thus reducing its toxicity. The sequence is that of Fluoride-specific ion channel FluC from Xanthomonas oryzae pv. oryzae (strain KACC10331 / KXO85).